The chain runs to 128 residues: Large ribosomal subunit protein bL19 (128 aa).

The protein belongs to the bacterial ribosomal protein bL19 family.

Its function is as follows. This protein is located at the 30S-50S ribosomal subunit interface and may play a role in the structure and function of the aminoacyl-tRNA binding site. This chain is Large ribosomal subunit protein bL19, found in Azoarcus sp. (strain BH72).